The primary structure comprises 433 residues: Arabinooligosaccharide-binding protein (433 aa).

An N-terminal signal peptide occupies residues 1-21; that stretch reads MKKMTVCFLVLMMLLTLVIAG. C22 carries N-palmitoyl cysteine lipidation. C22 carries S-diacylglycerol cysteine lipidation.

It belongs to the bacterial solute-binding protein 1 family. In terms of assembly, the complex is composed of two ATP-binding proteins (MsmX), two transmembrane proteins (AraP and AraQ) and a solute-binding protein (AraN).

Its subcellular location is the cell membrane. Functionally, part of the ABC transporter complex AraNPQ involved in the uptake of arabinooligosaccharides. Transports alpha-1,5-arabinooligosaccharides, at least up to four L-arabinosyl units. AraN captures the substrate and delivers it to the two transmembrane components. This chain is Arabinooligosaccharide-binding protein, found in Bacillus subtilis (strain 168).